The primary structure comprises 187 residues: Elongation factor P (187 aa).

It belongs to the elongation factor P family.

It localises to the cytoplasm. Its pathway is protein biosynthesis; polypeptide chain elongation. Its function is as follows. Involved in peptide bond synthesis. Stimulates efficient translation and peptide-bond synthesis on native or reconstituted 70S ribosomes in vitro. Probably functions indirectly by altering the affinity of the ribosome for aminoacyl-tRNA, thus increasing their reactivity as acceptors for peptidyl transferase. The protein is Elongation factor P of Mycolicibacterium vanbaalenii (strain DSM 7251 / JCM 13017 / BCRC 16820 / KCTC 9966 / NRRL B-24157 / PYR-1) (Mycobacterium vanbaalenii).